Here is a 365-residue protein sequence, read N- to C-terminus: MQTRRVVLKSAAAAGTLLGGLAGCASVAGSIGTGDRINTVRGPITISEAGFTLTHEHICGSSAGFLRAWPEFFGSRKALAEKAVRGLRRARAAGVRTIVDVSTFDIGRDVSLLAEVSRAADVHIVAATGLWFDPPLSMRLRSVEELTQFFLREIQYGIEDTGIRAGIIKVATTGKATPFQELVLKAAARASLATGVPVTTHTAASQRDGEQQAAIFESEGLSPSRVCIGHSDDTDDLSYLTALAARGYLIGLDHIPHSAIGLEDNASASALLGIRSWQTRALLIKALIDQGYMKQILVSNDWLFGFSSYVTNIMDVMDRVNPDGMAFIPLRVIPFLREKGVPQETLAGITVTNPARFLSPTLRAS.

The segment at residues M1–G29 is a signal peptide (tat-type signal). Residues H55, H57, K169, H201, H230, and D301 each coordinate Zn(2+). Residue K169 is modified to N6-carboxylysine.

The protein belongs to the metallo-dependent hydrolases superfamily. Phosphotriesterase family. In terms of assembly, homodimer. Zn(2+) is required as a cofactor. Post-translationally, predicted to be exported by the Tat system. The position of the signal peptide cleavage has been experimentally proven.

The protein localises to the cell membrane. It carries out the reaction An aryl dialkyl phosphate + H2O = dialkyl phosphate + an aryl alcohol.. In terms of biological role, has an unusual substrate specificity for synthetic organophosphate triesters and phosphorofluoridates. All of the phosphate triesters found to be substrates are synthetic compounds. The identity of any naturally occurring substrate for the enzyme is unknown. Has no detectable activity with phosphate monoesters or diesters and no activity as an esterase or protease. It catalyzes the hydrolysis of the insecticide paraoxon at a rate approaching the diffusion limit and thus appears to be optimally evolved for utilizing this synthetic substrate. In Brevundimonas diminuta (Pseudomonas diminuta), this protein is Parathion hydrolase (opd).